The sequence spans 185 residues: Ribosome-recycling factor (185 aa).

This sequence belongs to the RRF family.

Its subcellular location is the cytoplasm. In terms of biological role, responsible for the release of ribosomes from messenger RNA at the termination of protein biosynthesis. May increase the efficiency of translation by recycling ribosomes from one round of translation to another. The chain is Ribosome-recycling factor from Xylella fastidiosa (strain Temecula1 / ATCC 700964).